Consider the following 297-residue polypeptide: Phosphatidylserine decarboxylase proenzyme (297 aa).

Active-site charge relay system; for autoendoproteolytic cleavage activity residues include Asp90, His147, and Ser252. Ser252 (schiff-base intermediate with substrate; via pyruvic acid; for decarboxylase activity) is an active-site residue. Residue Ser252 is modified to Pyruvic acid (Ser); by autocatalysis.

It belongs to the phosphatidylserine decarboxylase family. PSD-B subfamily. Prokaryotic type I sub-subfamily. In terms of assembly, heterodimer of a large membrane-associated beta subunit and a small pyruvoyl-containing alpha subunit. It depends on pyruvate as a cofactor. In terms of processing, is synthesized initially as an inactive proenzyme. Formation of the active enzyme involves a self-maturation process in which the active site pyruvoyl group is generated from an internal serine residue via an autocatalytic post-translational modification. Two non-identical subunits are generated from the proenzyme in this reaction, and the pyruvate is formed at the N-terminus of the alpha chain, which is derived from the carboxyl end of the proenzyme. The autoendoproteolytic cleavage occurs by a canonical serine protease mechanism, in which the side chain hydroxyl group of the serine supplies its oxygen atom to form the C-terminus of the beta chain, while the remainder of the serine residue undergoes an oxidative deamination to produce ammonia and the pyruvoyl prosthetic group on the alpha chain. During this reaction, the Ser that is part of the protease active site of the proenzyme becomes the pyruvoyl prosthetic group, which constitutes an essential element of the active site of the mature decarboxylase.

The protein localises to the cell membrane. The enzyme catalyses a 1,2-diacyl-sn-glycero-3-phospho-L-serine + H(+) = a 1,2-diacyl-sn-glycero-3-phosphoethanolamine + CO2. It functions in the pathway phospholipid metabolism; phosphatidylethanolamine biosynthesis; phosphatidylethanolamine from CDP-diacylglycerol: step 2/2. In terms of biological role, catalyzes the formation of phosphatidylethanolamine (PtdEtn) from phosphatidylserine (PtdSer). This chain is Phosphatidylserine decarboxylase proenzyme, found in Stutzerimonas stutzeri (strain A1501) (Pseudomonas stutzeri).